The sequence spans 267 residues: Translation initiation factor 2 subunit alpha (267 aa).

Residues 12-83 form the S1 motif domain; sequence GEIVMATVER…KRKYANLSLR (72 aa).

It belongs to the eIF-2-alpha family. As to quaternary structure, heterotrimer composed of an alpha, a beta and a gamma chain.

EIF-2 functions in the early steps of protein synthesis by forming a ternary complex with GTP and initiator tRNA. This chain is Translation initiation factor 2 subunit alpha, found in Methanopyrus kandleri (strain AV19 / DSM 6324 / JCM 9639 / NBRC 100938).